The sequence spans 379 residues: Putative F-box protein At5g62660 (379 aa).

Residues 35–84 (ALVAPEIPLDLLIEILTKLPAKSLMRFKCVSKLWSSLIRSRFFSNCYLTV) enclose the F-box domain.

The sequence is that of Putative F-box protein At5g62660 from Arabidopsis thaliana (Mouse-ear cress).